The chain runs to 393 residues: NAD(P)H-quinone oxidoreductase subunit H, chloroplastic (393 aa).

It belongs to the complex I 49 kDa subunit family. As to quaternary structure, NDH is composed of at least 16 different subunits, 5 of which are encoded in the nucleus.

It localises to the plastid. It is found in the chloroplast thylakoid membrane. It catalyses the reaction a plastoquinone + NADH + (n+1) H(+)(in) = a plastoquinol + NAD(+) + n H(+)(out). The enzyme catalyses a plastoquinone + NADPH + (n+1) H(+)(in) = a plastoquinol + NADP(+) + n H(+)(out). In terms of biological role, NDH shuttles electrons from NAD(P)H:plastoquinone, via FMN and iron-sulfur (Fe-S) centers, to quinones in the photosynthetic chain and possibly in a chloroplast respiratory chain. The immediate electron acceptor for the enzyme in this species is believed to be plastoquinone. Couples the redox reaction to proton translocation, and thus conserves the redox energy in a proton gradient. The chain is NAD(P)H-quinone oxidoreductase subunit H, chloroplastic from Oenothera biennis (German evening primrose).